The sequence spans 782 residues: Zinc finger Y-chromosomal protein 1 (782 aa).

Disordered regions lie at residues 211-233 (ADLE…SKLD) and 360-386 (LNQD…ESKQ). Residues 217–229 (SEVTMNAESGTDS) show a composition bias toward polar residues. The short motif at 372–382 (PKQKSKKKKRP) is the Nuclear localization signal element. Residues 373–382 (KQKSKKKKRP) are compositionally biased toward basic residues. 13 consecutive C2H2-type zinc fingers follow at residues 403–425 (YPCM…TKNH), 434–456 (YHCT…MESH), 466–488 (TECD…KTMH), 497–520 (CKCK…LVVH), 526–548 (HICG…IRVH), 554–577 (YECQ…KSKH), 583–605 (LKCG…AVLH), 611–634 (HQCS…ISVH), 640–662 (HKCD…VATH), 668–691 (HQCR…LSAH), 697–719 (FKCK…MKTH), 725–748 (YQCE…ISIH), and 754–777 (HSCD…MRHH).

This sequence belongs to the krueppel C2H2-type zinc-finger protein family. ZFX/ZFY subfamily.

It localises to the nucleus. Functionally, probable transcriptional activator. Binds to the consensus sequence 5'-AGGCCY-3'. The protein is Zinc finger Y-chromosomal protein 1 (Zfy1) of Mus musculus (Mouse).